Consider the following 346-residue polypeptide: Protein RecA (346 aa).

66–73 (GPESSGKT) contributes to the ATP binding site.

Belongs to the RecA family.

The protein localises to the cytoplasm. In terms of biological role, can catalyze the hydrolysis of ATP in the presence of single-stranded DNA, the ATP-dependent uptake of single-stranded DNA by duplex DNA, and the ATP-dependent hybridization of homologous single-stranded DNAs. It interacts with LexA causing its activation and leading to its autocatalytic cleavage. The polypeptide is Protein RecA (Aromatoleum aromaticum (strain DSM 19018 / LMG 30748 / EbN1) (Azoarcus sp. (strain EbN1))).